The primary structure comprises 291 residues: uncharacterized protein (291 aa).

10 helical membrane-spanning segments follow: residues 1 to 21 (MHNL…LKIA), 26 to 46 (IIIE…SYFL), 67 to 87 (PIFL…SKAV), 95 to 115 (SDAA…LIFH), 117 to 137 (TLSQ…FCLL), 149 to 169 (FKGV…DILF), 179 to 199 (FPAT…IYLF), 208 to 228 (SSVI…LFYI), 241 to 261 (VFAG…ALVF), and 270 to 290 (WLGI…DKII). An EamA domain is found at 107 to 138 (ILAAFLIFHETLSQSKIIGVVLAFIGLFCLLT).

It localises to the cell membrane. This is an uncharacterized protein from Haemophilus influenzae (strain ATCC 51907 / DSM 11121 / KW20 / Rd).